A 130-amino-acid polypeptide reads, in one-letter code: Small ribosomal subunit protein uS8 (130 aa).

It belongs to the universal ribosomal protein uS8 family.

This chain is Small ribosomal subunit protein uS8 (RPS22A), found in Eremothecium gossypii (strain ATCC 10895 / CBS 109.51 / FGSC 9923 / NRRL Y-1056) (Yeast).